The chain runs to 296 residues: Phosphatidylglycerol--prolipoprotein diacylglyceryl transferase (296 aa).

The next 7 membrane-spanning stretches (helical) occupy residues 17–37 (LAVRWYGLMYLVGFIAAIVVG), 59–79 (MMFYGVLGTVLGGRLGYVLFY), 97–117 (GGMSFHGGFLGVTLAMMLFAW), 129–149 (FVAPMVPLGLAAGRLGNFING), 204–224 (SQLYEIALEGIALFFVLFLFA), 230–250 (MGAISALFLIGYGLARFTVEF), and 257–277 (FLGLLALGLSMGQWLSLPMIL). Arginine 142 is a binding site for a 1,2-diacyl-sn-glycero-3-phospho-(1'-sn-glycerol).

The protein belongs to the Lgt family.

Its subcellular location is the cell inner membrane. It carries out the reaction L-cysteinyl-[prolipoprotein] + a 1,2-diacyl-sn-glycero-3-phospho-(1'-sn-glycerol) = an S-1,2-diacyl-sn-glyceryl-L-cysteinyl-[prolipoprotein] + sn-glycerol 1-phosphate + H(+). It functions in the pathway protein modification; lipoprotein biosynthesis (diacylglyceryl transfer). In terms of biological role, catalyzes the transfer of the diacylglyceryl group from phosphatidylglycerol to the sulfhydryl group of the N-terminal cysteine of a prolipoprotein, the first step in the formation of mature lipoproteins. This is Phosphatidylglycerol--prolipoprotein diacylglyceryl transferase from Burkholderia cenocepacia (strain HI2424).